Consider the following 240-residue polypeptide: NADH-quinone oxidoreductase subunit I 2 (240 aa).

4Fe-4S ferredoxin-type domains are found at residues 57-86 (TDLR…IEWH) and 97-126 (DRFA…MGYD). Residues cysteine 66, cysteine 69, cysteine 72, cysteine 76, cysteine 106, cysteine 109, cysteine 112, and cysteine 116 each contribute to the [4Fe-4S] cluster site. The interval 185–240 (IHGYLGRPPLPKGYEPELKPQFRKPAEEAAEAQQAEAAGQPAAEPGKTNGEEAGQP) is disordered. Residues 198 to 211 (YEPELKPQFRKPAE) show a composition bias toward basic and acidic residues. Residues 215 to 230 (EAQQAEAAGQPAAEPG) show a composition bias toward low complexity.

This sequence belongs to the complex I 23 kDa subunit family. As to quaternary structure, NDH-1 is composed of 14 different subunits. Subunits NuoA, H, J, K, L, M, N constitute the membrane sector of the complex. [4Fe-4S] cluster serves as cofactor.

It is found in the cell membrane. The catalysed reaction is a quinone + NADH + 5 H(+)(in) = a quinol + NAD(+) + 4 H(+)(out). Its function is as follows. NDH-1 shuttles electrons from NADH, via FMN and iron-sulfur (Fe-S) centers, to quinones in the respiratory chain. The immediate electron acceptor for the enzyme in this species is believed to be ubiquinone. Couples the redox reaction to proton translocation (for every two electrons transferred, four hydrogen ions are translocated across the cytoplasmic membrane), and thus conserves the redox energy in a proton gradient. The chain is NADH-quinone oxidoreductase subunit I 2 from Symbiobacterium thermophilum (strain DSM 24528 / JCM 14929 / IAM 14863 / T).